Here is a 416-residue protein sequence, read N- to C-terminus: Phosphatidylinositol 5-phosphate 4-kinase type-2 beta (416 aa).

Ser-2 carries the N-acetylserine modification. Thr-8 carries the post-translational modification Phosphothreonine. Position 19 is a phosphoserine (Ser-19). The PIPK domain maps to 38–415 (ASEPILSVLM…RFNEFMSNIL (378 aa)). A required for interaction with PIP5K1A region spans residues 64–70 (VMLMPDD). N6-acetyllysine is present on residues Lys-94 and Lys-150. ATP-binding positions include 202–204 (RNV) and Lys-214. GTP-binding positions include 203 to 204 (NV) and Lys-214. Thr-322 is modified (phosphothreonine). Ser-326 carries the phosphoserine modification. GTP is bound at residue Asp-369.

In terms of assembly, homodimer. Binds TNFRSF1A. Interacts with PIP4K2A; the interaction suppresses ubiquitination by the SPOP/CUL3 complex. Post-translationally, ubiquitinated by the SPOP/CUL3 complex. Ubiquitination is stimulated by PtdIns5P levels. Phosphorylated on serine residues. As to expression, highly expressed in brain, heart, pancreas, skeletal muscle and kidney. Detected at lower levels in placenta, lung and liver.

It is found in the endoplasmic reticulum membrane. It localises to the cell membrane. The protein localises to the nucleus. The protein resides in the cytoplasm. It catalyses the reaction a 1,2-diacyl-sn-glycero-3-phospho-(1D-myo-inositol-5-phosphate) + ATP = a 1,2-diacyl-sn-glycero-3-phospho-(1D-myo-inositol-4,5-bisphosphate) + ADP + H(+). The catalysed reaction is 1,2-dihexadecanoyl-sn-glycero-3-phospho-(1D-myo-inositol-5-phosphate) + ATP = 1,2-dihexadecanoyl-sn-glycero-3-phospho-(1D-myo-inositol-4,5-bisphosphate) + ADP + H(+). It carries out the reaction 1,2-dihexadecanoyl-sn-glycero-3-phospho-(1D-myo-inositol-5-phosphate) + GTP = 1,2-dihexadecanoyl-sn-glycero-3-phospho-(1D-myo-inositol-4,5-bisphosphate) + GDP + H(+). Participates in the biosynthesis of phosphatidylinositol 4,5-bisphosphate. Preferentially utilizes GTP, rather than ATP, for PI(5)P phosphorylation and its activity reflects changes in direct proportion to the physiological GTP concentration. Its GTP-sensing activity is critical for metabolic adaptation. PIP4Ks negatively regulate insulin signaling through a catalytic-independent mechanism. They interact with PIP5Ks and suppress PIP5K-mediated PtdIns(4,5)P2 synthesis and insulin-dependent conversion to PtdIns(3,4,5)P3. This Homo sapiens (Human) protein is Phosphatidylinositol 5-phosphate 4-kinase type-2 beta.